Here is a 139-residue protein sequence, read N- to C-terminus: MKKGTVLNSDISSVISRLGHTDTLVVCDAGLPIPKSTTRIDMALTQGVPSFMQVLGVVTNEMQVEAVIIAEEIKQHNPQLHETLLTHLEQLQKHQGNTIEIRYTTHEQFKQQTAGSQAVIRSGECSPYANIILCAGVTF.

Histidine 20 serves as the catalytic Proton donor. Residues aspartate 28, histidine 106, and 128 to 130 (YAN) each bind substrate.

The protein belongs to the RbsD / FucU family. RbsD subfamily. In terms of assembly, homodecamer.

The protein resides in the cytoplasm. The enzyme catalyses beta-D-ribopyranose = beta-D-ribofuranose. The protein operates within carbohydrate metabolism; D-ribose degradation; D-ribose 5-phosphate from beta-D-ribopyranose: step 1/2. Catalyzes the interconversion of beta-pyran and beta-furan forms of D-ribose. This is D-ribose pyranase from Escherichia coli O45:K1 (strain S88 / ExPEC).